The chain runs to 353 residues: Methionine import ATP-binding protein MetN (353 aa).

Residues 8–249 form the ABC transporter domain; it reads LDQIDVTFHQ…PKQPLTQDFI (242 aa). Residue 42–49 participates in ATP binding; the sequence is GYSGAGKS.

It belongs to the ABC transporter superfamily. Methionine importer (TC 3.A.1.24) family. The complex is composed of two ATP-binding proteins (MetN), two transmembrane proteins (MetI) and a solute-binding protein (MetQ).

Its subcellular location is the cell membrane. The catalysed reaction is L-methionine(out) + ATP + H2O = L-methionine(in) + ADP + phosphate + H(+). It carries out the reaction D-methionine(out) + ATP + H2O = D-methionine(in) + ADP + phosphate + H(+). Part of the ABC transporter complex MetNIQ involved in methionine import. Responsible for energy coupling to the transport system. This chain is Methionine import ATP-binding protein MetN, found in Streptococcus pneumoniae (strain ATCC BAA-255 / R6).